A 299-amino-acid chain; its full sequence is Riboflavin transporter ImpX (299 aa).

2 consecutive EamA domains span residues Lys6 to Thr144 and Ser162 to Lys294. Helical transmembrane passes span Gly7–Pro27, Val34–Gly54, Asp68–Val88, Val101–Leu121, Tyr129–Leu149, Leu158–Phe178, Ile202–Gly222, Trp224–Phe244, Val253–Asn273, and Val276–Ser296.

Belongs to the EamA transporter family.

The protein localises to the cell membrane. In terms of biological role, transports riboflavin into the cell. The protein is Riboflavin transporter ImpX of Fusobacterium nucleatum subsp. nucleatum (strain ATCC 23726 / VPI 4351).